Here is a 278-residue protein sequence, read N- to C-terminus: Undecaprenyl-diphosphatase 1 (278 aa).

5 helical membrane-spanning segments follow: residues 85–105 (LNVIIATIPAIVLGLLFEKTI), 108–128 (ALFSPVPVAFALVAGGVVILW), 188–208 (VATEFSFFLAIPIIFGATAYE), 218–238 (VDALGTFALGFVAAFVSAFAC), and 254–274 (FAWYRIGFGLLILLVGYSGAL).

The protein belongs to the UppP family.

It localises to the cell inner membrane. It catalyses the reaction di-trans,octa-cis-undecaprenyl diphosphate + H2O = di-trans,octa-cis-undecaprenyl phosphate + phosphate + H(+). In terms of biological role, catalyzes the dephosphorylation of undecaprenyl diphosphate (UPP). Confers resistance to bacitracin. The chain is Undecaprenyl-diphosphatase 1 from Paraburkholderia xenovorans (strain LB400).